A 330-amino-acid polypeptide reads, in one-letter code: Delta-aminolevulinic acid dehydratase (330 aa).

Positions 122, 124, 131, and 132 each coordinate Zn(2+). The active-site Schiff-base intermediate with substrate is lysine 199. Position 199 is an N6-succinyllysine (lysine 199). Arginine 209 is a binding site for 5-aminolevulinate. At serine 215 the chain carries Phosphoserine. Arginine 221 contributes to the 5-aminolevulinate binding site. Cysteine 223 lines the Zn(2+) pocket. Lysine 252 (schiff-base intermediate with substrate) is an active-site residue. Lysine 252 bears the N6-succinyllysine mark. 5-aminolevulinate-binding residues include serine 279 and tyrosine 318.

Belongs to the ALAD family. As to quaternary structure, homooctamer; active form. Homohexamer; low activity form. Zn(2+) serves as cofactor.

It localises to the cytoplasm. Its subcellular location is the cytosol. It catalyses the reaction 2 5-aminolevulinate = porphobilinogen + 2 H2O + H(+). Its pathway is porphyrin-containing compound metabolism; protoporphyrin-IX biosynthesis; coproporphyrinogen-III from 5-aminolevulinate: step 1/4. With respect to regulation, can alternate between a fully active homooctamer and a low-activity homohexamer. A bound magnesium ion may promote the assembly of the fully active homooctamer. The magnesium-binding site is absent in the low-activity homohexamer. Inhibited by compounds that favor the hexameric state. Inhibited by divalent lead ions. The lead ions partially displace the zinc cofactor. In terms of biological role, catalyzes an early step in the biosynthesis of tetrapyrroles. Binds two molecules of 5-aminolevulinate per subunit, each at a distinct site, and catalyzes their condensation to form porphobilinogen. The chain is Delta-aminolevulinic acid dehydratase (ALAD) from Macaca fascicularis (Crab-eating macaque).